The chain runs to 449 residues: Glutamyl-tRNA reductase (449 aa).

Substrate-binding positions include 58-61 (TCNR), Ser-121, 126-128 (ETQ), and Gln-132. The active-site Nucleophile is Cys-59. 203–208 (GLGEMA) contributes to the NADP(+) binding site.

It belongs to the glutamyl-tRNA reductase family. Homodimer.

The enzyme catalyses (S)-4-amino-5-oxopentanoate + tRNA(Glu) + NADP(+) = L-glutamyl-tRNA(Glu) + NADPH + H(+). Its pathway is porphyrin-containing compound metabolism; protoporphyrin-IX biosynthesis; 5-aminolevulinate from L-glutamyl-tRNA(Glu): step 1/2. In terms of biological role, catalyzes the NADPH-dependent reduction of glutamyl-tRNA(Glu) to glutamate 1-semialdehyde (GSA). This Helicobacter pylori (strain G27) protein is Glutamyl-tRNA reductase.